Here is a 552-residue protein sequence, read N- to C-terminus: Glutamyl-tRNA reductase 1, chloroplastic (552 aa).

Substrate contacts are provided by residues 150–153, Ser-210, 215–217, and Gln-221; these read TCNR and EGQ. Residue Cys-151 is the Nucleophile of the active site. 292-297 contributes to the NADP(+) binding site; that stretch reads GAGKMG.

The protein belongs to the glutamyl-tRNA reductase family. Primarily in cotyledons and hypocotyls of greening cucumber seedlings.

It is found in the plastid. It localises to the chloroplast. The catalysed reaction is (S)-4-amino-5-oxopentanoate + tRNA(Glu) + NADP(+) = L-glutamyl-tRNA(Glu) + NADPH + H(+). It functions in the pathway porphyrin-containing compound metabolism; protoporphyrin-IX biosynthesis; 5-aminolevulinate from L-glutamyl-tRNA(Glu): step 1/2. Catalyzes the NADPH-dependent reduction of glutamyl-tRNA(Glu) to glutamate 1-semialdehyde (GSA). The sequence is that of Glutamyl-tRNA reductase 1, chloroplastic (HEMA1) from Cucumis sativus (Cucumber).